The sequence spans 115 residues: Histone H2A-Bbd type 2/3 (115 aa).

Residues 1–21 (MPRRRRRRGSSGAGGRGRTCS) form a disordered region. Positions 87-115 (LLDMVVHNDRLLSTLFNTTTISQVAPGED) are docking domain.

The protein belongs to the histone H2A family. The nucleosome is a histone octamer containing two molecules each of H2A, H2B, H3 and H4 assembled in one H3-H4 heterotetramer and two H2A-H2B heterodimers. May be incorporated into a proportion of nucleosomes, replacing one or more H2A molecules. Present in mature sperm.

Its subcellular location is the nucleus. It localises to the chromosome. Its function is as follows. Atypical histone H2A which can replace conventional H2A in some nucleosomes and is associated with active transcription and mRNA processing. Nucleosomes wrap and compact DNA into chromatin, limiting DNA accessibility to the cellular machineries which require DNA as a template. Histones thereby play a central role in transcription regulation, DNA repair, DNA replication and chromosomal stability. Nucleosomes containing this histone are less rigid and organize less DNA than canonical nucleosomes in vivo. They are enriched in actively transcribed genes and associate with the elongating form of RNA polymerase. They associate with spliceosome components and are required for mRNA splicing. May participate in spermatogenesis. The chain is Histone H2A-Bbd type 2/3 from Homo sapiens (Human).